The following is a 113-amino-acid chain: Prefoldin subunit beta (113 aa).

Belongs to the prefoldin subunit beta family. Heterohexamer of two alpha and four beta subunits.

It localises to the cytoplasm. Its function is as follows. Molecular chaperone capable of stabilizing a range of proteins. Seems to fulfill an ATP-independent, HSP70-like function in archaeal de novo protein folding. The polypeptide is Prefoldin subunit beta (Methanococcus maripaludis (strain C6 / ATCC BAA-1332)).